A 298-amino-acid chain; its full sequence is tRNA dimethylallyltransferase (298 aa).

10-17 serves as a coordination point for ATP; that stretch reads GATATGKS. Position 12–17 (12–17) interacts with substrate; sequence TATGKS. Residues 35–38 are interaction with substrate tRNA; the sequence is DSRQ.

It belongs to the IPP transferase family. In terms of assembly, monomer. Mg(2+) serves as cofactor.

It carries out the reaction adenosine(37) in tRNA + dimethylallyl diphosphate = N(6)-dimethylallyladenosine(37) in tRNA + diphosphate. In terms of biological role, catalyzes the transfer of a dimethylallyl group onto the adenine at position 37 in tRNAs that read codons beginning with uridine, leading to the formation of N6-(dimethylallyl)adenosine (i(6)A). The protein is tRNA dimethylallyltransferase of Picosynechococcus sp. (strain ATCC 27264 / PCC 7002 / PR-6) (Agmenellum quadruplicatum).